Here is a 314-residue protein sequence, read N- to C-terminus: Putative S-adenosyl-L-methionine-dependent methyltransferase MAP_4191c (314 aa).

Residues D138 and 167 to 168 each bind S-adenosyl-L-methionine; that span reads DL.

It belongs to the UPF0677 family.

Its function is as follows. Exhibits S-adenosyl-L-methionine-dependent methyltransferase activity. The protein is Putative S-adenosyl-L-methionine-dependent methyltransferase MAP_4191c of Mycolicibacterium paratuberculosis (strain ATCC BAA-968 / K-10) (Mycobacterium paratuberculosis).